The sequence spans 443 residues: Thymidine phosphorylase (443 aa).

The protein belongs to the thymidine/pyrimidine-nucleoside phosphorylase family. As to quaternary structure, homodimer.

The enzyme catalyses thymidine + phosphate = 2-deoxy-alpha-D-ribose 1-phosphate + thymine. The protein operates within pyrimidine metabolism; dTMP biosynthesis via salvage pathway; dTMP from thymine: step 1/2. The enzymes which catalyze the reversible phosphorolysis of pyrimidine nucleosides are involved in the degradation of these compounds and in their utilization as carbon and energy sources, or in the rescue of pyrimidine bases for nucleotide synthesis. The polypeptide is Thymidine phosphorylase (Shewanella oneidensis (strain ATCC 700550 / JCM 31522 / CIP 106686 / LMG 19005 / NCIMB 14063 / MR-1)).